A 464-amino-acid chain; its full sequence is MAVYNYDVVVLGSGPAGEGAAMNAAKAGRKVAMVDSRRQVGGNCTHLGTIPSKALRHSVRQIMQFNTNPMFRAIGEPRWFSFPDVLKSAEKVISKQVASRTGYYARNRVDLFFGTGSFADEQTVEVVCANGVVEKLVAKHIIIATGSRPYRPADIDFHHPRIYDSDTILSLGHTPRKLIIYGAGVIGCEYASIFSGLGVLVELVDNRDQLLSFLDSEISQALSYHFSNNNITVRHNEEYERVEGLDNGVILHLKSGKKIKADALLWCNGRTGNTDKLGMENIGVKVNSRGQIEVDENYRTCVTNIYGAGDVIGWPSLASAAHDQGRSAAGSIVDNGSWRYVNDVPTGIYTIPEISSIGKNEHELTKAKVPYEVGKAFFKSMARAQIAGEPQGMLKILFHRETLEVLGVHCFGYQASEIVHIGQAIMSQPGEQNTLKYFVNTTFNYPTMAEAYRVAAYDGLNRLF.

Position 35–44 (35–44 (DSRRQVGGNC)) interacts with FAD.

Belongs to the class-I pyridine nucleotide-disulfide oxidoreductase family. The cofactor is FAD.

Its subcellular location is the cytoplasm. The catalysed reaction is NAD(+) + NADPH = NADH + NADP(+). Its function is as follows. Conversion of NADPH, generated by peripheral catabolic pathways, to NADH, which can enter the respiratory chain for energy generation. This Pseudomonas fluorescens (strain SBW25) protein is Soluble pyridine nucleotide transhydrogenase.